The chain runs to 261 residues: Carbonic anhydrase 1 (261 aa).

Positions 1-31 (MASPDWGYDDKNGPEQWSKLYPIANGNNQSP) are disordered. Ala2 is subject to N-acetylalanine. The region spanning 4-261 (PDWGYDDKNG…LKGRTVRASF (258 aa)) is the Alpha-carbonic anhydrase domain. Residue His65 is the Proton donor/acceptor of the active site. Residues His65, His68, His95, His97, and His120 each coordinate Zn(2+). Substrate-binding positions include Thr200 and 200-201 (TH). His201 is a Zn(2+) binding site. The segment at 241–261 (PMQHNNRPTQPLKGRTVRASF) is disordered.

This sequence belongs to the alpha-carbonic anhydrase family. Zn(2+) is required as a cofactor.

It localises to the cytoplasm. The enzyme catalyses hydrogencarbonate + H(+) = CO2 + H2O. It carries out the reaction urea = cyanamide + H2O. Activated by histamine, imidazole, L-adrenaline, L- and D-histidine, and L- and D-phenylalanine. Inhibited by coumarins, sulfonamide derivatives such as acetazolamide, benzenesulfonamide and derivatives (4-carboxyethylbenzene-sulfonamide, 4-carboxyethylbenzene-sulfonamide ethyl ester, 4-(acetyl-2-aminoethyl)benzene-sulfonamide, 4-aminoethylbenzene-sulfonamide), and 'prong inhibitors' BR15, BR17, BR22 and BR30. Activated by a short exposition to Foscarnet (phosphonoformate trisodium salt), but inhibited by a long one. Esterase activity weakly reduced by cyanamide. Functionally, catalyzes the reversible hydration of carbon dioxide. Can hydrate cyanamide to urea. This chain is Carbonic anhydrase 1 (CA1), found in Homo sapiens (Human).